The chain runs to 201 residues: MARYTGPATRVSRRLRVDLVGGDMAFERRPYPPGQAGRNRIKESEYLLQLQEKQKAKYTYGVLERQFRRYYVEANRQPGKTGDNLVVLLETRLDNVVYRAGLARTRRQARQLVSHGHFTVNGKKTNVPSYRVSQYDIIDIRERSRKMEWFEEAQDRLGEAVVPAWLQVVPESLRILVHQLPERAQIDVPLQEQLIVELYSK.

The S4 RNA-binding domain maps to 91-154 (TRLDNVVYRA…RKMEWFEEAQ (64 aa)).

Belongs to the universal ribosomal protein uS4 family. As to quaternary structure, part of the 30S ribosomal subunit. Contacts protein S5. The interaction surface between S4 and S5 is involved in control of translational fidelity.

Functionally, one of the primary rRNA binding proteins, it binds directly to 16S rRNA where it nucleates assembly of the body of the 30S subunit. Its function is as follows. With S5 and S12 plays an important role in translational accuracy. The polypeptide is Small ribosomal subunit protein uS4 (Corynebacterium ammoniagenes (Brevibacterium ammoniagenes)).